Here is a 184-residue protein sequence, read N- to C-terminus: Ribosome-recycling factor (184 aa).

The protein belongs to the RRF family.

It is found in the cytoplasm. Its function is as follows. Responsible for the release of ribosomes from messenger RNA at the termination of protein biosynthesis. May increase the efficiency of translation by recycling ribosomes from one round of translation to another. The protein is Ribosome-recycling factor of Acinetobacter baumannii (strain SDF).